Reading from the N-terminus, the 259-residue chain is Protein FAM220A (259 aa).

Residues 29 to 66 (GLKRRSEKRNPSPSDVPSWTDQPVADTHGKSRAMAAAS) form a disordered region. The span at 39–49 (PSPSDVPSWTD) shows a compositional bias: polar residues.

Interacts with transcriptional activator STAT3; the interaction occurs in both the nucleus and the cytoplasm, is enhanced by IL6 and promotes STAT3 dephosphorylation, leading to negative regulation of STAT3 transcriptional activator activity. Can interact with both unphosphorylated and phosphorylated STAT3 but interacts preferentially with phosphorylated STAT3 in the nucleus. Interacts with protein phosphatase PTPN2/TC45; this promotes interaction of PTPN2 with STAT3, leading to dephosphorylation of STAT3 by PTPN2.

Its subcellular location is the nucleus. The protein resides in the cytoplasm. The protein localises to the cytoplasmic vesicle. It localises to the secretory vesicle. It is found in the acrosome. In terms of biological role, promotes dephosphorylation of transcriptional activator STAT3 by interacting with both STAT3 and protein phosphatase PTPN2. This promotes interaction of PTPN2 with STAT3 and mediates STAT3 dephosphorylation by PTPN2, leading to negative regulation of STAT3 transcriptional activator activity. May be required for spermiogenesis or sperm function. The sequence is that of Protein FAM220A (Fam220a) from Rattus norvegicus (Rat).